The following is a 1496-amino-acid chain: MIFSQGASPLKGDFSRIKFSIASPESILAHSRGEVLKPETINYRTFKPERDGLMCEKIFGPTKDWECYCGKYKRVRYKGIICDRCGVEVTTKSVRRERMGHISLAVPVVHTWFFRSVPSKIGALLDLSTKELERIIYYEVYVVINPGEPGEKQGIKKLDRLTEEQYFQIITEYEDNQDLDDTDSAKFVAKMGGEAIHMLLKSIDLNETAVTLRKVLRESSSEQKRADALKRLKVVESFRKSYEPQKKTRKKPGGLFPEDEIPEPYVYEGNKPEYMVMEVVPVIPPELRPLVPLEGGRFATSDLNDLYRRVIIRNNRLKKLIDIRAPEVILRNEKRMLQEAVDALFDNSRKANAVKTGESNRPLKSLSDALKGKQGRFRQNLLGKRVDYSGRSVIVVGPELKLHECGLPKSMAIELFQPFVIRRLVERGIAKSVKSAKKLIDKKDPIVWDVLEKVIDGRPVLLNRAPTLHRLGIQAFQPVLIEGKAIQIHPLVCTAFNADFDGDQMAVHVPLSQEAQLEASLLMLSSHNLILPQSGKPVTVPSQDMVLGMYYLTKSRSGEEGEGRIFYDSEDVLIAYNEQRVGLHAQIFVCFNGLVDQKFDPLRVLETVIDEKSEKYGWLRSQLEQKKMLLTTVGRVIFNQHVPESIGFINRVIDKKVAKELIGRLSSEVGNVETAKFLDNIKEVGFHYAMKGGLSVGLSDAIVPETKVRHIKSAQKDSTKVVKEYNRGTLTDNERYNQIVDVWQKTSNIVAEESYQKLKKDRDGFNPLYMMLDSGARGSREQVRQLTGMRGLIARPQKSMSGQPGEIIENPIISNLKEGLTVLEYFISTHGARKGLSDTSLKTADAGYLTRRLHDVAQDVIVTIDDCGTTRGLHVYRNIEEETSGQIKFREKIRGRVAARDIYDTLNNNVVVKAGEIITDELADLVQDTAGVEEAEIRSVLTCESKVGICSKCYGTNLSVHKLVEIGEAVGVIAAQSIGEPGTQLTLRTFHQGGTAQGGISETETKAFNEGVLEFEDVKTVEHSSINEDGVEDLRTIVIQKNGKINIVDPESGKVLKRYVIPHGAHLHCRPGNAVKKDQVLFSSEPNSTQIIAETPGSVRFADIEKGVTYKEEVDPQTGFAQHTIINWRSKLRANETREPRIMIIDASGEIRKTYPVPIKSNLYVEDGQKVLPGDIIAKVPRNLDRVGGDITAGLPKVTELFEARIPSDPAIVSEIDGYVSFGSQRRSSKEIKVKNDFGEEKIYYVQVGKHVLANEGDEVKAGDPMTDGAVSPQDILRIQGPNAVQQYLVNEIQKVYQINAGVEINDKHLEVIVRQMLQKVRVEEPGDTELLPGDLIDRSAFIEANENIAEKVRVTDKGDAPARIQDGQLCKMRDIAKLNRELRKNSKKLVVIEPTLQATSHPVLLGITSAALQTESVISAASFQETTKVLTDAAVAGKIDNLLGLKENVIVGKLIPAGTGLKRYRTIRLTGDTQKQAAVAEAVAAPDKEIEGHGI.

The Zn(2+) site is built by cysteine 67, cysteine 69, cysteine 82, and cysteine 85. Mg(2+) is bound by residues aspartate 499, aspartate 501, and aspartate 503. Residues cysteine 867, cysteine 943, cysteine 950, and cysteine 953 each coordinate Zn(2+).

The protein belongs to the RNA polymerase beta' chain family. As to quaternary structure, the RNAP catalytic core consists of 2 alpha, 1 beta, 1 beta' and 1 omega subunit. When a sigma factor is associated with the core the holoenzyme is formed, which can initiate transcription. Mg(2+) is required as a cofactor. The cofactor is Zn(2+).

The catalysed reaction is RNA(n) + a ribonucleoside 5'-triphosphate = RNA(n+1) + diphosphate. Its function is as follows. DNA-dependent RNA polymerase catalyzes the transcription of DNA into RNA using the four ribonucleoside triphosphates as substrates. The sequence is that of DNA-directed RNA polymerase subunit beta' from Chlorobium limicola (strain DSM 245 / NBRC 103803 / 6330).